The chain runs to 282 residues: Shikimate dehydrogenase (NADP(+)) (282 aa).

Shikimate-binding positions include 19-21 (SFS) and Thr-66. The Proton acceptor role is filled by Lys-70. Positions 91 and 106 each coordinate shikimate. NADP(+)-binding positions include 130 to 134 (GAGGA), 152 to 157 (NRTVEK), Thr-196, Met-200, and Leu-224. Residue Tyr-226 coordinates shikimate. Residue Gly-247 participates in NADP(+) binding.

The protein belongs to the shikimate dehydrogenase family. In terms of assembly, homodimer.

It catalyses the reaction shikimate + NADP(+) = 3-dehydroshikimate + NADPH + H(+). It participates in metabolic intermediate biosynthesis; chorismate biosynthesis; chorismate from D-erythrose 4-phosphate and phosphoenolpyruvate: step 4/7. Functionally, involved in the biosynthesis of the chorismate, which leads to the biosynthesis of aromatic amino acids. Catalyzes the reversible NADPH linked reduction of 3-dehydroshikimate (DHSA) to yield shikimate (SA). The chain is Shikimate dehydrogenase (NADP(+)) from Methanocaldococcus jannaschii (strain ATCC 43067 / DSM 2661 / JAL-1 / JCM 10045 / NBRC 100440) (Methanococcus jannaschii).